Consider the following 198-residue polypeptide: Recombination protein RecR (198 aa).

Residues 57–72 (CEKCNTFTEAQICEVC) form a C4-type zinc finger. In terms of domain architecture, Toprim spans 80–175 (TLLCVVETPA…AVTRLARGVP (96 aa)).

The protein belongs to the RecR family.

Functionally, may play a role in DNA repair. It seems to be involved in an RecBC-independent recombinational process of DNA repair. It may act with RecF and RecO. The chain is Recombination protein RecR from Paraburkholderia phytofirmans (strain DSM 17436 / LMG 22146 / PsJN) (Burkholderia phytofirmans).